Here is a 215-residue protein sequence, read N- to C-terminus: Urease accessory protein UreG (215 aa).

24 to 31 (GPVGSGKT) lines the GTP pocket.

It belongs to the SIMIBI class G3E GTPase family. UreG subfamily. In terms of assembly, homodimer. UreD, UreF and UreG form a complex that acts as a GTP-hydrolysis-dependent molecular chaperone, activating the urease apoprotein by helping to assemble the nickel containing metallocenter of UreC. The UreE protein probably delivers the nickel.

The protein localises to the cytoplasm. In terms of biological role, facilitates the functional incorporation of the urease nickel metallocenter. This process requires GTP hydrolysis, probably effectuated by UreG. The protein is Urease accessory protein UreG of Burkholderia orbicola (strain MC0-3).